The following is a 631-amino-acid chain: Phosphomethylpyrimidine synthase (631 aa).

Residues asparagine 239, methionine 268, tyrosine 297, histidine 333, 353–355, 394–397, and glutamate 433 each bind substrate; these read SRG and DGLR. Histidine 437 provides a ligand contact to Zn(2+). Tyrosine 460 serves as a coordination point for substrate. Histidine 501 provides a ligand contact to Zn(2+). Positions 581, 584, and 589 each coordinate [4Fe-4S] cluster.

This sequence belongs to the ThiC family. In terms of assembly, homodimer. The cofactor is [4Fe-4S] cluster.

The enzyme catalyses 5-amino-1-(5-phospho-beta-D-ribosyl)imidazole + S-adenosyl-L-methionine = 4-amino-2-methyl-5-(phosphooxymethyl)pyrimidine + CO + 5'-deoxyadenosine + formate + L-methionine + 3 H(+). It participates in cofactor biosynthesis; thiamine diphosphate biosynthesis. Its function is as follows. Catalyzes the synthesis of the hydroxymethylpyrimidine phosphate (HMP-P) moiety of thiamine from aminoimidazole ribotide (AIR) in a radical S-adenosyl-L-methionine (SAM)-dependent reaction. The sequence is that of Phosphomethylpyrimidine synthase from Escherichia coli O6:K15:H31 (strain 536 / UPEC).